We begin with the raw amino-acid sequence, 322 residues long: Ferrochelatase (322 aa).

Fe cation contacts are provided by H195 and E276.

Belongs to the ferrochelatase family.

The protein localises to the cytoplasm. It catalyses the reaction heme b + 2 H(+) = protoporphyrin IX + Fe(2+). It participates in porphyrin-containing compound metabolism; protoheme biosynthesis; protoheme from protoporphyrin-IX: step 1/1. Functionally, catalyzes the ferrous insertion into protoporphyrin IX. The sequence is that of Ferrochelatase from Edwardsiella ictaluri (strain 93-146).